Reading from the N-terminus, the 792-residue chain is Phosphatidylinositol 4-phosphate 5-kinase type-1 sktl (792 aa).

Positions 1 to 21 are enriched in basic and acidic residues; sequence MDTRVELELEPVGKQDRLKDQ. Disordered regions lie at residues 1–74, 105–139, 423–446, 577–612, and 640–714; these read MDTR…QPGT, TQTP…KKLG, AKLQ…DAPE, TPTF…PTNA, and AAST…TDLS. Composition is skewed to polar residues over residues 52–62 and 105–131; these read QTASPDQEATP and TQTP…STTG. The 419-residue stretch at 155–573 folds into the PIPK domain; the sequence is QSKQIMGSIQ…RFQDAMGKQV (419 aa). Positions 642–658 are enriched in low complexity; sequence STSSLQQQRSSNQSNNN. Polar residues predominate over residues 678 to 702; that stretch reads EPSSTYHTQYSYDSSGRTGSALTSD.

In terms of assembly, interacts with ash2 (via B30.2/SPRY domain); the interaction is direct and seems to be specific for ash2 isoform B.

The protein resides in the cytoplasm. It is found in the cell cortex. Its subcellular location is the nucleus. The protein localises to the chromosome. It localises to the apical cell membrane. The protein resides in the cell projection. It is found in the cilium. Its subcellular location is the flagellum membrane. The enzyme catalyses a 1,2-diacyl-sn-glycero-3-phospho-(1D-myo-inositol 4-phosphate) + ATP = a 1,2-diacyl-sn-glycero-3-phospho-(1D-myo-inositol-4,5-bisphosphate) + ADP + H(+). Its function is as follows. Catalyzes the phosphorylation of phosphatidylinositol 4-phosphate (PtdIns[4]P) to form phosphatidylinositol 4,5-bisphosphate (PtdIns[4,5]P(2)), a lipid second messenger that regulates several cellular processes such as signal transduction, vesicle trafficking, actin cytoskeleton dynamics, cell adhesion, and cell motility. PtdIns[4,5]P(2) can directly act as a second messenger or can be utilized as a precursor to generate other second messengers: inositol 1,4,5-trisphosphate (IP3), diacylglycerol (DAG) or phosphatidylinositol-3,4,5-trisphosphate (PtdIns[3,4,5]P(3)). Required for germline development during oogenesis. Sktl is the major phosphatidylinositol 4-phosphate 5-kinase responsible for enrichment of PtdIns[4,5]P(2) in the apical plasma membrane of the oocyte and follicular epithelium cells of the egg chamber during oogenesis. Involved in nuclear anchoring and microtubule organization required for targeted mRNA transport during maintenance of oocyte polarity. The PtdIns[4,5]P(2) produced by sktl is required for maintenance of cellular polarity, prevention of the epithelial-mesenchymal transition process, maintenance of adherens junctions and regulation of apical constriction, probably by affecting polarized cortical recruitment of PAR proteins and their effectors, including baz/bazooka, aPKC, par-1 and l(2)gl. Involved in actin cytoskeleton organization probably through PtdIns[4,5]P(2)-mediated regulation of Moe/Moesin phosphorylation. Involved in PtdIns[4,5]P(2)-mediated apical recruitment of the formin dia/diaphanous in tubular epithelial cells. Involved in anterodorsal cell morphogenesis and eggshell dorsal appendage formation, probably through regulation of apical constriction by PtdIns[4,5]P(2) during tubulogenesis. Required for cell viability or proliferation during wing and eye imaginal disk development. May be involved in cytoskeletal regulation during sensory bristle development. Together with mys/integrin beta localizes to the trailing edge of larval epidermal cells in a JNK signaling-dependent manner during wound healing and is required for setting up cell polarity and re-epithelialization. Required for polarization of elongating spermatid cysts possibly by generation of PtdIns[4,5]P(2) involved in mediating membrane association and orientation of the nucleus-basal body pair. Probably involved in PtdIns[4,5]P(2)-mediated recruitment of exocyst proteins that may mediate membrane addition during spermatid elongation. Involved in maintenance of specialised cell contacts known as slit diaphragms required for nephrocyte morphogenesis and function. Regulates nephrocyte endocytosis, possibly through PtdIns[4,5]P(2)-mediated recruitment of effector proteins. Not required for nervous system development or neurotransmitter release at the neuromuscular junction. Together with ash2 probably plays a role in maintenance of transcriptionally active chromatin through down-regulation of histone H1 hyperphosphorylation. The chain is Phosphatidylinositol 4-phosphate 5-kinase type-1 sktl from Drosophila melanogaster (Fruit fly).